Reading from the N-terminus, the 378-residue chain is MAIEFKRSPKPTIGVEWEIALVDPESRDLAPRAAEVLEIVAERHPEVHLEGEFLQNTVELVTGICDTVPEAVAELDRALAAVQEAATELGLRPWTSGSHPFSDFRENPVSKKGSYDEIIARTQYWGNQMLIWGIHVHVGISHEDRVWPIINALVTNYPHLLALSASSPAWDGLDTGYASNRTMLYQQLPTAGLPYQFQSWDEWVSYMADQDKSGVINHTGSMHFDIRPASKWGTIEVRIADSTSNLRELSAIAALTHCLVVHYDRMIDRGEQLPTLQPWHVAENKWRAARYGLDAEIIISRDTDEAMVQDELRRLVDRLTPLAAELGCLRELDLVLEIIERGGGYERQRRAYQRTGTWIAAVDLACDELNELRPLEAE.

Belongs to the glutamate--cysteine ligase type 2 family. YbdK subfamily.

The catalysed reaction is L-cysteine + L-glutamate + ATP = gamma-L-glutamyl-L-cysteine + ADP + phosphate + H(+). ATP-dependent carboxylate-amine ligase which exhibits weak glutamate--cysteine ligase activity. The chain is Putative glutamate--cysteine ligase 2-1 from Corynebacterium efficiens (strain DSM 44549 / YS-314 / AJ 12310 / JCM 11189 / NBRC 100395).